Consider the following 296-residue polypeptide: Myozenin-1 (296 aa).

Serine 82 carries the post-translational modification Phosphoserine. Composition is skewed to gly residues over residues 105–117 (FSYG…GQAG) and 134–170 (SGFG…QAGG). The disordered stretch occupies residues 105–172 (FSYGKGSSGG…GSGDQAGGDG (68 aa)).

This sequence belongs to the myozenin family. In terms of assembly, interacts with ACTN2, ACTN3, FLNA, FLNB, FLNC, LDB3, PPP3CA and TCAP. Interacts via its C-terminal region with MYOT. As to expression, expressed primarily in skeletal muscle and specifically enriched in the gastrocnemius, which is composed predominantly of fast-twitch muscle fibers. Detected at lower levels in heart.

The protein resides in the nucleus. It localises to the cell projection. The protein localises to the pseudopodium. Functionally, myozenins may serve as intracellular binding proteins involved in linking Z-disk proteins such as alpha-actinin, gamma-filamin, TCAP/telethonin, LDB3/ZASP and localizing calcineurin signaling to the sarcomere. Plays an important role in the modulation of calcineurin signaling. May play a role in myofibrillogenesis. The protein is Myozenin-1 of Mus musculus (Mouse).